We begin with the raw amino-acid sequence, 497 residues long: Lysine--tRNA ligase (497 aa).

2 residues coordinate Mg(2+): Glu-406 and Glu-413.

It belongs to the class-II aminoacyl-tRNA synthetase family. As to quaternary structure, homodimer. Mg(2+) is required as a cofactor.

The protein resides in the cytoplasm. The enzyme catalyses tRNA(Lys) + L-lysine + ATP = L-lysyl-tRNA(Lys) + AMP + diphosphate. In Rhizobium leguminosarum bv. trifolii (strain WSM2304), this protein is Lysine--tRNA ligase.